Consider the following 171-residue polypeptide: Probable DNA-directed RNA polymerase subunit delta (171 aa).

Positions Met-14–Trp-81 constitute an HTH HARE-type domain. The disordered stretch occupies residues Glu-138–Glu-171.

The protein belongs to the RpoE family. As to quaternary structure, RNAP is composed of a core of 2 alpha, a beta and a beta' subunits. The core is associated with a delta subunit and one of several sigma factors.

Its function is as follows. Participates in both the initiation and recycling phases of transcription. In the presence of the delta subunit, RNAP displays an increased specificity of transcription, a decreased affinity for nucleic acids, and an increased efficiency of RNA synthesis because of enhanced recycling. The sequence is that of Probable DNA-directed RNA polymerase subunit delta from Bacillus licheniformis (strain ATCC 14580 / DSM 13 / JCM 2505 / CCUG 7422 / NBRC 12200 / NCIMB 9375 / NCTC 10341 / NRRL NRS-1264 / Gibson 46).